Here is a 120-residue protein sequence, read N- to C-terminus: Large ribosomal subunit protein bL20 (120 aa).

It belongs to the bacterial ribosomal protein bL20 family.

Its function is as follows. Binds directly to 23S ribosomal RNA and is necessary for the in vitro assembly process of the 50S ribosomal subunit. It is not involved in the protein synthesizing functions of that subunit. The chain is Large ribosomal subunit protein bL20 from Methylacidiphilum infernorum (isolate V4) (Methylokorus infernorum (strain V4)).